A 97-amino-acid polypeptide reads, in one-letter code: Co-chaperonin GroES (97 aa).

This sequence belongs to the GroES chaperonin family. As to quaternary structure, heptamer of 7 subunits arranged in a ring. Interacts with the chaperonin GroEL.

It is found in the cytoplasm. Its function is as follows. Together with the chaperonin GroEL, plays an essential role in assisting protein folding. The GroEL-GroES system forms a nano-cage that allows encapsulation of the non-native substrate proteins and provides a physical environment optimized to promote and accelerate protein folding. GroES binds to the apical surface of the GroEL ring, thereby capping the opening of the GroEL channel. This chain is Co-chaperonin GroES, found in Proteus mirabilis (strain HI4320).